The following is a 1408-amino-acid chain: DNA-directed RNA polymerase subunit beta' (1408 aa).

4 residues coordinate Zn(2+): Cys70, Cys72, Cys85, and Cys88. Residues Asp460, Asp462, and Asp464 each contribute to the Mg(2+) site. 4 residues coordinate Zn(2+): Cys822, Cys896, Cys903, and Cys906. Residues 1386-1408 (DTGEAPPLSEEETGEIRNSGYAV) are disordered.

The protein belongs to the RNA polymerase beta' chain family. The RNAP catalytic core consists of 2 alpha, 1 beta, 1 beta' and 1 omega subunit. When a sigma factor is associated with the core the holoenzyme is formed, which can initiate transcription. It depends on Mg(2+) as a cofactor. The cofactor is Zn(2+).

The catalysed reaction is RNA(n) + a ribonucleoside 5'-triphosphate = RNA(n+1) + diphosphate. DNA-dependent RNA polymerase catalyzes the transcription of DNA into RNA using the four ribonucleoside triphosphates as substrates. In Nitrosospira multiformis (strain ATCC 25196 / NCIMB 11849 / C 71), this protein is DNA-directed RNA polymerase subunit beta'.